We begin with the raw amino-acid sequence, 452 residues long: UPF0761 membrane protein Bpet3042 (452 aa).

Helical transmembrane passes span 56 to 76, 114 to 134, 153 to 173, 195 to 215, 225 to 245, and 259 to 279; these read VLGI…FPVF, LTAI…MTID, ALVY…SLWA, AISF…FVVV, ALVG…AFAY, and AFAT…AVLF.

Belongs to the UPF0761 family.

The protein resides in the cell inner membrane. The polypeptide is UPF0761 membrane protein Bpet3042 (Bordetella petrii (strain ATCC BAA-461 / DSM 12804 / CCUG 43448)).